A 404-amino-acid polypeptide reads, in one-letter code: Phosphopentomutase (404 aa).

Mn(2+)-binding residues include Asp10, Asp303, His308, Asp344, His345, and His356.

The protein belongs to the phosphopentomutase family. The cofactor is Mn(2+).

The protein resides in the cytoplasm. It catalyses the reaction 2-deoxy-alpha-D-ribose 1-phosphate = 2-deoxy-D-ribose 5-phosphate. It carries out the reaction alpha-D-ribose 1-phosphate = D-ribose 5-phosphate. The protein operates within carbohydrate degradation; 2-deoxy-D-ribose 1-phosphate degradation; D-glyceraldehyde 3-phosphate and acetaldehyde from 2-deoxy-alpha-D-ribose 1-phosphate: step 1/2. Functionally, isomerase that catalyzes the conversion of deoxy-ribose 1-phosphate (dRib-1-P) and ribose 1-phosphate (Rib-1-P) to deoxy-ribose 5-phosphate (dRib-5-P) and ribose 5-phosphate (Rib-5-P), respectively. The polypeptide is Phosphopentomutase (Shewanella sp. (strain MR-7)).